The sequence spans 29 residues: Alpha-amylase inhibitor 2 (29 aa).

Belongs to the protease inhibitor I6 (cereal trypsin/alpha-amylase inhibitor) family.

The protein localises to the secreted. Functionally, alpha-amylase inhibitor. The chain is Alpha-amylase inhibitor 2 from Saussurea costus (Costus).